Reading from the N-terminus, the 127-residue chain is Putative platinum sensitivity protein 1 (127 aa).

The sequence is that of Putative platinum sensitivity protein 1 (PSY1) from Saccharomyces cerevisiae (strain ATCC 204508 / S288c) (Baker's yeast).